The chain runs to 213 residues: Peptidyl-tRNA hydrolase (213 aa).

Tyr15 provides a ligand contact to tRNA. The active-site Proton acceptor is His20. TRNA-binding residues include Tyr66, Asn68, and Asn114. Residues Met186–Ala213 are disordered. Residues Pro196–Ala213 are compositionally biased toward pro residues.

It belongs to the PTH family. Monomer.

The protein resides in the cytoplasm. The catalysed reaction is an N-acyl-L-alpha-aminoacyl-tRNA + H2O = an N-acyl-L-amino acid + a tRNA + H(+). Functionally, hydrolyzes ribosome-free peptidyl-tRNAs (with 1 or more amino acids incorporated), which drop off the ribosome during protein synthesis, or as a result of ribosome stalling. Catalyzes the release of premature peptidyl moieties from peptidyl-tRNA molecules trapped in stalled 50S ribosomal subunits, and thus maintains levels of free tRNAs and 50S ribosomes. This Leptothrix cholodnii (strain ATCC 51168 / LMG 8142 / SP-6) (Leptothrix discophora (strain SP-6)) protein is Peptidyl-tRNA hydrolase.